The following is a 503-amino-acid chain: EZH inhibitory protein (503 aa).

Positions 1-16 are enriched in basic and acidic residues; the sequence is MATQSDMEKEQKHQQD. Disordered stretches follow at residues 1–72, 97–462, and 483–503; these read MATQ…AAAA, HSDR…RSIS, and VPPEEQAEIESTAHPATPPEP. The span at 41–72 shows a compositional bias: low complexity; sequence PAASVTTVSSQASPSGGAALSSSTAGSSAAAA. Residues 97 to 107 are compositionally biased toward basic and acidic residues; it reads HSDRQDCRSPH. The span at 184-197 shows a compositional bias: polar residues; it reads YPCSGASTSSQATQ. Ser259 is modified (phosphoserine). A compositionally biased stretch (low complexity) spans 345–366; that stretch reads LRSRSTQQRSALLSRRSLSGSA. The interval 401-409 is sufficient for interaction with EZH2; sequence WHAVRMRAS. Residues 403 to 423 form a necessary and sufficient for inhibition of PRC2/EED-EZH1 and PRC2/EED-EZH2 complex activity region; the sequence is AVRMRASSPSPPGRFFLPIPQ. Residues 428-453 are compositionally biased toward low complexity; sequence SSSSSYASNSSSPSRSPGLSPSSPSP.

In terms of assembly, interacts with PRC2/EED-EZH1 complex member EZH1 and with PRC2/EED-EZH2 complex member EZH2; the interaction blocks EZH1/EZH2 methyltransferase activity. Interacts (via C-terminus) with SUZ12 which is a member of the PRC2/EED-EZH1 and PRC2/EED-EZH2 complexes. As to expression, in testis, detected in male germ cells inside the seminiferous tubules, especially in spermatogonia and round spermatids (at protein level). In the ovary, expressed in primordial follicles and oocytes but not the external follicle cells (at protein level).

The protein localises to the nucleus. It localises to the cytoplasm. In terms of biological role, inhibits PRC2/EED-EZH1 and PRC2/EED-EZH2 complex function by inhibiting EZH1/EZH2 methyltransferase activity, thereby causing down-regulation of histone H3 trimethylation on 'Lys-27' (H3K27me3). Probably inhibits methyltransferase activity by limiting the stimulatory effect of cofactors such as AEBP2 and JARID2. Inhibits H3K27me3 deposition during spermatogenesis and oogenesis. In Homo sapiens (Human), this protein is EZH inhibitory protein.